Consider the following 348-residue polypeptide: Phosphoribosylformylglycinamidine cyclo-ligase (348 aa).

This sequence belongs to the AIR synthase family.

It localises to the cytoplasm. The catalysed reaction is 2-formamido-N(1)-(5-O-phospho-beta-D-ribosyl)acetamidine + ATP = 5-amino-1-(5-phospho-beta-D-ribosyl)imidazole + ADP + phosphate + H(+). It functions in the pathway purine metabolism; IMP biosynthesis via de novo pathway; 5-amino-1-(5-phospho-D-ribosyl)imidazole from N(2)-formyl-N(1)-(5-phospho-D-ribosyl)glycinamide: step 2/2. The polypeptide is Phosphoribosylformylglycinamidine cyclo-ligase (Cereibacter sphaeroides (strain ATCC 17025 / ATH 2.4.3) (Rhodobacter sphaeroides)).